Here is a 528-residue protein sequence, read N- to C-terminus: Zinc finger protein 16-like (528 aa).

A disordered region spans residues 1–28; the sequence is MSRKRNHCYMETGASSESQGAFVDSAGP. Residues 79-106 adopt a coiled-coil conformation; that stretch reads IRVLKMELREKSDEIELLKAKLESAEKD. Disordered regions lie at residues 159 to 202 and 232 to 293; these read GAAE…TDAE and FKGD…DRME. The segment covering 232-242 has biased composition (basic and acidic residues); sequence FKGDSETKCED. A compositionally biased stretch (acidic residues) spans 244–256; it reads PPMDEEDENEDSE. 2 stretches are compositionally biased toward basic and acidic residues: residues 257-270 and 278-293; these read EGRGSLRSVSDHFP and GEDRSSPAEDSMDRME. Residues 303-326 form a C2H2-type 1 zinc finger; that stretch reads FICPFCGTLCPDSSFLEEHIKLMH. Residues 333–345 show a composition bias toward low complexity; the sequence is QSTSAGSSSQAEG. The tract at residues 333–359 is disordered; the sequence is QSTSAGSSSQAEGDSGEAGPASRGARE. 4 consecutive C2H2-type zinc fingers follow at residues 366–388, 394–416, 423–445, and 451–473; these read YECGDCGRHFNYLGNLRQHQRIH, FVCPECGERFRHTARLKSHRLSH, FPCPQCGKGFPVLSGLKRHQRVH, and YACPQCGRRFKELGNLYTHMRIH. Residues 479–501 form a C2H2-type 6; degenerate zinc finger; it reads YTCYQCGRSFRHLGTYKSHRCMP. The segment at 502 to 528 is disordered; it reads ATQMPSEHSPPWAQEDKVQTGRLQGYV.

The protein belongs to the krueppel C2H2-type zinc-finger protein family.

The protein resides in the nucleus. Its function is as follows. Probable transcription factor. Important for development and migration of oligodendrocyte precursor cells, and normal myelination of axons in the central nervous system (CNS). Functions autonomously in oligodendrocytes to promote CNS myelination. Seems to act in parallel with notch3 during oligodendrocyte development. The sequence is that of Zinc finger protein 16-like from Danio rerio (Zebrafish).